The primary structure comprises 530 residues: Glutamate--cysteine ligase (530 aa).

This sequence belongs to the glutamate--cysteine ligase type 1 family. Type 1 subfamily.

The catalysed reaction is L-cysteine + L-glutamate + ATP = gamma-L-glutamyl-L-cysteine + ADP + phosphate + H(+). The protein operates within sulfur metabolism; glutathione biosynthesis; glutathione from L-cysteine and L-glutamate: step 1/2. This Saccharophagus degradans (strain 2-40 / ATCC 43961 / DSM 17024) protein is Glutamate--cysteine ligase.